The primary structure comprises 179 residues: UPF0227 protein Shewmr4_1727 (179 aa).

It belongs to the UPF0227 family.

The protein is UPF0227 protein Shewmr4_1727 of Shewanella sp. (strain MR-4).